We begin with the raw amino-acid sequence, 340 residues long: MSEHAPLRALNTFHVEATARWLLSVHTPEALPQALAAPEIADQPLLVLGSGSNVLLAGDPPGCVLCFENRDTAIIAHHADHAIVRAGAGVNWHALVLYSLQQGLSGLENLALIPGTVGACPIQNIGAYGAQVGDFIHVVEAFDRHHQQFVRLDAAACALGYRDSVFKQQPERYLIVAVEFNLPLLCELRLDYAGIREELASMGAELARAADVAQAVINIRQRKLPDPDVLGNAGSFFKNPLLPNEQIAALQASFTDMPVYPGEHAGLGKLSAAWLIEQCGWKGRREGDAGVSPEHALVLVNYGTASGAQLLDFARRIAESVRERYSVILEPEPRIIGAHW.

Positions 14–185 (HVEATARWLL…VAVEFNLPLL (172 aa)) constitute an FAD-binding PCMH-type domain. R162 is an active-site residue. Catalysis depends on S235, which acts as the Proton donor. E332 is a catalytic residue.

The protein belongs to the MurB family. It depends on FAD as a cofactor.

Its subcellular location is the cytoplasm. The catalysed reaction is UDP-N-acetyl-alpha-D-muramate + NADP(+) = UDP-N-acetyl-3-O-(1-carboxyvinyl)-alpha-D-glucosamine + NADPH + H(+). The protein operates within cell wall biogenesis; peptidoglycan biosynthesis. Functionally, cell wall formation. In Xanthomonas oryzae pv. oryzae (strain KACC10331 / KXO85), this protein is UDP-N-acetylenolpyruvoylglucosamine reductase.